The following is a 77-amino-acid chain: Putative antitoxin VapB3 (77 aa).

It belongs to the UPF0330 family.

Possibly the antitoxin component of a type II toxin-antitoxin (TA) system. Its cognate toxin is VapC3 (Potential). This chain is Putative antitoxin VapB3 (vapB3), found in Methanocaldococcus jannaschii (strain ATCC 43067 / DSM 2661 / JAL-1 / JCM 10045 / NBRC 100440) (Methanococcus jannaschii).